A 185-amino-acid chain; its full sequence is Lipid A acyltransferase PagP (185 aa).

An N-terminal signal peptide occupies residues 1-24 (MKTHNDILAALAALPLFLTGAAFA). Catalysis depends on residues histidine 57, aspartate 100, and serine 101.

This sequence belongs to the lipid A palmitoyltransferase family. Homodimer.

Its subcellular location is the cell outer membrane. It catalyses the reaction a lipid A + a 1,2-diacyl-sn-glycero-3-phosphocholine = a hepta-acyl lipid A + a 2-acyl-sn-glycero-3-phosphocholine. The enzyme catalyses a lipid IVA + a 1,2-diacyl-sn-glycero-3-phosphocholine = a lipid IVB + a 2-acyl-sn-glycero-3-phosphocholine. The catalysed reaction is a lipid IIA + a 1,2-diacyl-sn-glycero-3-phosphocholine = a lipid IIB + a 2-acyl-sn-glycero-3-phosphocholine. Functionally, transfers a fatty acid residue from the sn-1 position of a phospholipid to the N-linked hydroxyfatty acid chain on the proximal unit of lipid A or its precursors. The polypeptide is Lipid A acyltransferase PagP (Edwardsiella tarda (strain FL6-60)).